Here is a 166-residue protein sequence, read N- to C-terminus: Peptide deformylase (166 aa).

2 residues coordinate Fe cation: Cys-88 and His-130. Glu-131 is an active-site residue. His-134 contacts Fe cation.

This sequence belongs to the polypeptide deformylase family. The cofactor is Fe(2+).

The catalysed reaction is N-terminal N-formyl-L-methionyl-[peptide] + H2O = N-terminal L-methionyl-[peptide] + formate. Its function is as follows. Removes the formyl group from the N-terminal Met of newly synthesized proteins. Requires at least a dipeptide for an efficient rate of reaction. N-terminal L-methionine is a prerequisite for activity but the enzyme has broad specificity at other positions. The chain is Peptide deformylase from Caldicellulosiruptor bescii (strain ATCC BAA-1888 / DSM 6725 / KCTC 15123 / Z-1320) (Anaerocellum thermophilum).